The following is a 954-amino-acid chain: cGMP-specific 3',5'-cyclic phosphodiesterase alpha (954 aa).

At 1 to 259 (MMDTKVDQTI…NTFYSSFPFK (259 aa)) the chain is on the cytoplasmic side. A helical transmembrane segment spans residues 260–280 (LFLHSLYMIFICFIYFVVLYF). Over 281–296 (MLLKKIYTHPFIFHLS) the chain is Extracellular. The helical transmembrane segment at 297–317 (VLKFLFDIIFFLSFILYPLFL) threads the bilayer. The Cytoplasmic portion of the chain corresponds to 318 to 327 (RLKRIDKIIY). A helical transmembrane segment spans residues 328 to 348 (SSYISSYIFVCVTFLYSFIIF). Over 349-365 (KCSSYSVKMNSNTYQNN) the chain is Extracellular. The chain crosses the membrane as a helical span at residues 366-386 (FVFQNMLFLLINIIYICIFCF). Topologically, residues 387–401 (LKNYMILYSFLYNCR) are cytoplasmic. The chain crosses the membrane as a helical span at residues 402-422 (FSIFCILFIFLYYYLFFSLDF). Residues 423 to 432 (YRIIHLPLDN) lie on the Extracellular side of the membrane. Residues 433-453 (FFFPFLCFLFFSFLFIFKIIM) form a helical membrane-spanning segment. The Cytoplasmic segment spans residues 454–954 (SLYYEYVYEK…LSKLELIKFE (501 aa)). The 345-residue stretch at 586–930 (NQEETKSFLS…ERWESHKNDN (345 aa)) folds into the PDEase domain. The Proton donor role is filled by H680. Residue 680–684 (HTSLH) coordinates 3',5'-cyclic GMP. Positions 684, 720, 721, and 832 each coordinate Zn(2+). Positions 721, 832, and 884 each coordinate 3',5'-cyclic GMP. D721 provides a ligand contact to Mg(2+).

This sequence belongs to the cyclic nucleotide phosphodiesterase family. It depends on Zn(2+) as a cofactor. Requires Mg(2+) as cofactor.

Its subcellular location is the membrane. The catalysed reaction is 3',5'-cyclic GMP + H2O = GMP + H(+). It functions in the pathway purine metabolism; 3',5'-cyclic GMP degradation; GMP from 3',5'-cyclic GMP: step 1/1. With respect to regulation, not inhibited by cAMP. Inhibited by zaprinast. In terms of biological role, specifically hydrolyzes the second messenger cGMP, which is a key regulator of many important physiological processes. The polypeptide is cGMP-specific 3',5'-cyclic phosphodiesterase alpha (Plasmodium falciparum (isolate 3D7)).